We begin with the raw amino-acid sequence, 480 residues long: Major capsid protein (480 aa).

It is found in the virion. Its function is as follows. Major protein of the capsid. The chain is Major capsid protein (MCP-1) from Trichoplusia ni ascovirus 2c (TnAV-2c).